Consider the following 260-residue polypeptide: MTSLKLLKEKAPLVICITNDVVKNFTANGLVALGASPAMSEFPADLEDLLKYAGGLLINIGTLTDENWKLYQAALKIAEKYNVPAVLDPVACGAGEYRKKVADDLINNYKLAAIRGNAGEIASLVGIDVASKGVDSAGVDNIDEIALAANEKFNIPIVVTGEVDAIAVNGEVVTIHNGSAMMPKVIGTGCLLGAVVASFIGLEKGQELKSLETAMLVYNIAGEMAEKRPNGHLPGTFKVEFINALYEITDEDVKEFKRVK.

Position 39 (methionine 39) interacts with substrate. ATP-binding residues include arginine 115 and threonine 160. A substrate-binding site is contributed by glycine 187.

It belongs to the Thz kinase family. Mg(2+) is required as a cofactor.

It carries out the reaction 5-(2-hydroxyethyl)-4-methylthiazole + ATP = 4-methyl-5-(2-phosphooxyethyl)-thiazole + ADP + H(+). Its pathway is cofactor biosynthesis; thiamine diphosphate biosynthesis; 4-methyl-5-(2-phosphoethyl)-thiazole from 5-(2-hydroxyethyl)-4-methylthiazole: step 1/1. In terms of biological role, catalyzes the phosphorylation of the hydroxyl group of 4-methyl-5-beta-hydroxyethylthiazole (THZ). The chain is Hydroxyethylthiazole kinase 1 from Streptococcus pneumoniae serotype 2 (strain D39 / NCTC 7466).